An 844-amino-acid chain; its full sequence is Neuronal PAS domain-containing protein 4B (844 aa).

Positions 61-74 (KMYRSTKGASKARR) are basic motif; degenerate. The 54-residue stretch at 61 to 114 (KMYRSTKGASKARRDQINAEIRSLKELLPISDADKARLSYLHIMSLACIYTRKS) folds into the bHLH domain. A helix-loop-helix motif region spans residues 75-114 (DQINAEIRSLKELLPISDADKARLSYLHIMSLACIYTRKS). PAS domains lie at 132–190 (SLPE…PVDH) and 294–343 (DMRI…LHNG). Polar residues predominate over residues 410 to 422 (SRQSSDPLSSPDQ). Disordered stretches follow at residues 410-432 (SRQSSDPLSSPDQVFTPSSSGLS), 444-479 (GRSSSEELPGTSAPSSMTFDPLEGEEIDPQSHGGGH), 702-725 (PLPNLPSPSPVPPSPYSSVPSYSQ), and 757-784 (TEGGLQDGERPDEDMEMMSSQRSSEAPA). Over residues 704–716 (PNLPSPSPVPPSP) the composition is skewed to pro residues.

As to quaternary structure, efficient DNA binding requires dimerization with another bHLH protein.

The protein resides in the nucleus. Transcription factor expressed in neurons of the brain that regulates the excitatory-inhibitory balance within neural circuits and is required for contextual memory in the hippocampus. Plays a key role in the structural and functional plasticity of neurons. Acts as an early-response transcription factor in both excitatory and inhibitory neurons, where it induces distinct but overlapping sets of late-response genes in these two types of neurons, allowing the synapses that form on inhibitory and excitatory neurons to be modified by neuronal activity in a manner specific to their function within a circuit, thereby facilitating appropriate circuit responses to sensory experience. This chain is Neuronal PAS domain-containing protein 4B (npas4b), found in Danio rerio (Zebrafish).